A 253-amino-acid polypeptide reads, in one-letter code: Indole-3-glycerol phosphate synthase (253 aa).

This sequence belongs to the TrpC family.

It carries out the reaction 1-(2-carboxyphenylamino)-1-deoxy-D-ribulose 5-phosphate + H(+) = (1S,2R)-1-C-(indol-3-yl)glycerol 3-phosphate + CO2 + H2O. Its pathway is amino-acid biosynthesis; L-tryptophan biosynthesis; L-tryptophan from chorismate: step 4/5. The polypeptide is Indole-3-glycerol phosphate synthase (Bacillus thuringiensis (strain Al Hakam)).